We begin with the raw amino-acid sequence, 380 residues long: 3-dehydroquinate synthase (380 aa).

The protein belongs to the archaeal-type DHQ synthase family.

The enzyme catalyses 2-amino-2,3,7-trideoxy-D-lyxo-hept-6-ulosonate + NAD(+) + H2O = 3-dehydroquinate + NH4(+) + NADH + H(+). Its function is as follows. Catalyzes the oxidative deamination and cyclization of 2-amino-3,7-dideoxy-D-threo-hept-6-ulosonic acid (ADH) to yield 3-dehydroquinate (DHQ), which is fed into the canonical shikimic pathway of aromatic amino acid biosynthesis. The chain is 3-dehydroquinate synthase from Methanosarcina mazei (strain ATCC BAA-159 / DSM 3647 / Goe1 / Go1 / JCM 11833 / OCM 88) (Methanosarcina frisia).